Consider the following 143-residue polypeptide: Sirohydrochlorin cobaltochelatase (143 aa).

His18 functions as the Proton acceptor in the catalytic mechanism. His18 is a Co(2+) binding site. Position 18 (His18) interacts with Ni(2+). Residues Arg53 and 78-83 (LAHGVH) each bind substrate. Residue His83 coordinates Co(2+). His83 is a Ni(2+) binding site.

The protein belongs to the CbiX family. CbiXS subfamily. As to quaternary structure, homotetramer; dimer of dimers.

It carries out the reaction Co-sirohydrochlorin + 2 H(+) = sirohydrochlorin + Co(2+). It catalyses the reaction Ni-sirohydrochlorin + 2 H(+) = sirohydrochlorin + Ni(2+). Its pathway is cofactor biosynthesis; adenosylcobalamin biosynthesis; cob(II)yrinate a,c-diamide from sirohydrochlorin (anaerobic route): step 1/10. Its function is as follows. Catalyzes the insertion of Co(2+) into sirohydrochlorin as part of the anaerobic pathway to cobalamin biosynthesis. Involved in the biosynthesis of the unique nickel-containing tetrapyrrole coenzyme F430, the prosthetic group of methyl-coenzyme M reductase (MCR), which plays a key role in methanogenesis and anaerobic methane oxidation (Potential). Catalyzes the insertion of Ni(2+) into sirohydrochlorin to yield Ni-sirohydrochlorin (Potential). The protein is Sirohydrochlorin cobaltochelatase of Methanothermobacter thermautotrophicus (strain ATCC 29096 / DSM 1053 / JCM 10044 / NBRC 100330 / Delta H) (Methanobacterium thermoautotrophicum).